A 488-amino-acid polypeptide reads, in one-letter code: Catalase (488 aa).

The tract at residues Met1–Arg26 is disordered. The segment covering Leu7–Thr23 has biased composition (polar residues). Catalysis depends on residues His55 and Asn128. Tyr338 provides a ligand contact to heme.

The protein belongs to the catalase family. Heme serves as cofactor.

The protein localises to the cytoplasm. It catalyses the reaction 2 H2O2 = O2 + 2 H2O. Functionally, decomposes hydrogen peroxide into water and oxygen; serves to protect cells from the toxic effects of hydrogen peroxide. The sequence is that of Catalase (kat) from Listeria monocytogenes serovar 1/2a (strain ATCC BAA-679 / EGD-e).